Here is a 320-residue protein sequence, read N- to C-terminus: Taste receptor type 2 member 109 (320 aa).

Residues 1-14 lie on the Extracellular side of the membrane; the sequence is MEHFLKSIFDISKN. Residues 15 to 35 form a helical membrane-spanning segment; sequence VLPIILFIELIIGIIGNGFMA. Over 36–62 the chain is Cytoplasmic; sequence LVHCMDWVKRKKMSLVNQILTTLATSR. Residues 63–83 traverse the membrane as a helical segment; that stretch reads ICLLWFMLLGLLITLLDPDLA. The Extracellular portion of the chain corresponds to 84–94; sequence SARMMIQVASN. The chain crosses the membrane as a helical span at residues 95-115; it reads LWIIANHMSIWLATCLTVFYF. The Cytoplasmic portion of the chain corresponds to 116–135; that stretch reads LKIANFSSSLFLYLKWRVEK. A helical transmembrane segment spans residues 136–156; sequence VISVIFLVSLVLLFLNMLLMN. The Extracellular segment spans residues 157-191; it reads LENDMCIAEYHQINISYSFIYHYRADCERRVLRLH. A glycan (N-linked (GlcNAc...) asparagine) is linked at Asn170. The helical transmembrane segment at 192–212 threads the bilayer; it reads IIILSVPFVLSLPTFLLLIFS. The Cytoplasmic segment spans residues 213-240; the sequence is LWTHHKKMQQHVQGRRDASTTAHFKALQ. The helical transmembrane segment at 241 to 261 threads the bilayer; the sequence is TVIAFLLLYCIFILSMLLQFW. At 262-270 the chain is on the extracellular side; the sequence is KYELMKKPL. A helical membrane pass occupies residues 271-291; it reads FILFCHIVYGAFPSFHSYVLI. Residues 292 to 320 are Cytoplasmic-facing; the sequence is LGDMKLRQASLSVLLWLKCRPNYIETLDL.

Belongs to the G-protein coupled receptor T2R family.

The protein localises to the membrane. Functionally, putative taste receptor which may play a role in the perception of bitterness. This chain is Taste receptor type 2 member 109, found in Rattus norvegicus (Rat).